We begin with the raw amino-acid sequence, 302 residues long: Monopolin complex subunit MAM1 (302 aa).

Disordered regions lie at residues 53–83 (YHKE…QNNV) and 257–276 (TSEN…SKGK). Residues 257–268 (TSENPFSSSPNT) are compositionally biased toward polar residues.

Component of the monopolin complex composed of at least CSM1, LRS4 and MAM1. The complex associates with the kinetochore during late pachytene. Post-translationally, phosphorylated by CDC5. This phosphorylation is required for the location to the kinetochores during late pachytene.

It is found in the nucleus. Functionally, component of the monopolin complex which promotes monoorientation during meiosis I, required for chromosome segregation during meiosis. This Saccharomyces cerevisiae (strain ATCC 204508 / S288c) (Baker's yeast) protein is Monopolin complex subunit MAM1 (MAM1).